The following is a 427-amino-acid chain: Histidine--tRNA ligase (427 aa).

The protein belongs to the class-II aminoacyl-tRNA synthetase family. In terms of assembly, homodimer.

It is found in the cytoplasm. It catalyses the reaction tRNA(His) + L-histidine + ATP = L-histidyl-tRNA(His) + AMP + diphosphate + H(+). The protein is Histidine--tRNA ligase (hisS) of Mycobacterium leprae (strain TN).